The following is a 656-amino-acid chain: Pheromone-regulated membrane protein 2 (656 aa).

4 helical membrane passes run 16-36 (FFSC…ILTI), 320-340 (IIFT…ERIL), 422-442 (WIIS…LIHW), and 634-654 (WGLL…FIIL).

It is found in the membrane. The polypeptide is Pheromone-regulated membrane protein 2 (PRM2) (Saccharomyces cerevisiae (strain ATCC 204508 / S288c) (Baker's yeast)).